The following is a 285-amino-acid chain: Nucleotide-binding protein Pfl01_0854 (285 aa).

Residue 8-15 (GRSGSGKS) participates in ATP binding. GTP is bound at residue 60-63 (DARN).

Belongs to the RapZ-like family.

Displays ATPase and GTPase activities. In Pseudomonas fluorescens (strain Pf0-1), this protein is Nucleotide-binding protein Pfl01_0854.